We begin with the raw amino-acid sequence, 435 residues long: ATP-dependent protease ATPase subunit HslU (435 aa).

ATP is bound by residues I18, 60 to 65 (GVGKTE), D248, E313, and R385.

This sequence belongs to the ClpX chaperone family. HslU subfamily. In terms of assembly, a double ring-shaped homohexamer of HslV is capped on each side by a ring-shaped HslU homohexamer. The assembly of the HslU/HslV complex is dependent on binding of ATP.

Its subcellular location is the cytoplasm. ATPase subunit of a proteasome-like degradation complex; this subunit has chaperone activity. The binding of ATP and its subsequent hydrolysis by HslU are essential for unfolding of protein substrates subsequently hydrolyzed by HslV. HslU recognizes the N-terminal part of its protein substrates and unfolds these before they are guided to HslV for hydrolysis. The protein is ATP-dependent protease ATPase subunit HslU of Rhizobium leguminosarum bv. trifolii (strain WSM2304).